Here is a 139-residue protein sequence, read N- to C-terminus: MRILGLDLGSKTLGVALSDEMGWTAQGIETIKIDEAGGDYGLNRLAELTKDYVIDKIVLGFPKNMNGTVGPRGEASQKFAEVLEETFQVPVVLWDERLSTMAAERMLISADVSRQKRKKVIDKMAAVMILQGYLDSLNS.

Belongs to the YqgF nuclease family.

The protein localises to the cytoplasm. In terms of biological role, could be a nuclease involved in processing of the 5'-end of pre-16S rRNA. This is Putative pre-16S rRNA nuclease from Bacillus licheniformis (strain ATCC 14580 / DSM 13 / JCM 2505 / CCUG 7422 / NBRC 12200 / NCIMB 9375 / NCTC 10341 / NRRL NRS-1264 / Gibson 46).